The chain runs to 257 residues: tRNA pseudouridine synthase A (257 aa).

The active-site Nucleophile is the Asp43. Substrate is bound at residue Tyr94.

The protein belongs to the tRNA pseudouridine synthase TruA family.

It catalyses the reaction uridine(38/39/40) in tRNA = pseudouridine(38/39/40) in tRNA. Functionally, formation of pseudouridine at positions 38, 39 and 40 in the anticodon stem and loop of transfer RNAs. The sequence is that of tRNA pseudouridine synthase A from Pyrobaculum calidifontis (strain DSM 21063 / JCM 11548 / VA1).